Reading from the N-terminus, the 649-residue chain is Golgin subfamily A member 6-like protein 26 (649 aa).

Disordered regions lie at residues 1–94, 300–330, 358–440, 455–572, and 584–620; these read MWPQ…HQEA, QEEK…RQEE, EKMH…EMWR, KEKM…REQE, and EQEE…MRRQ. The segment covering 10–23 has biased composition (low complexity); it reads HPHLPTHPHLPTHP. Over residues 25 to 46 the composition is skewed to basic and acidic residues; that stretch reads MSKETRQSKLAEAKEQLTDHHP. Polar residues-rich tracts occupy residues 47–57 and 65–77; these read QTNPSVGTAAS and NNGT…TSGG. Positions 80–94 are enriched in basic and acidic residues; that stretch reads SPEDEQKASHQHQEA. The stretch at 151-644 forms a coiled coil; sequence LEQALSAVAT…EEKMQEHQEH (494 aa).

This sequence belongs to the GOLGA6 family.

The chain is Golgin subfamily A member 6-like protein 26 (GOLGA6L26) from Homo sapiens (Human).